A 330-amino-acid polypeptide reads, in one-letter code: Lactamase-like protein nscB (330 aa).

Residues His-97, His-99, Asp-101, and His-102 each contribute to the Zn(2+) site. The Proton donor/acceptor role is filled by Asp-101.

The protein belongs to the metallo-beta-lactamase superfamily. Zn(2+) is required as a cofactor.

The protein operates within secondary metabolite biosynthesis. In terms of biological role, lactamase-like protein; part of the gene cluster that mediates the biosynthesis of neosartoricin, a prenylated anthracenone that exhibits T-cell antiproliferative activity, suggestive of a physiological role as an immunosuppressive agent. The non-reducing polyketide synthase nscA probably synthesizes and cyclizes the decaketide backbone. The hydrolase nscB then mediates the product release through hydrolysis followed by spontaneous decarboxylation. The prenyltransferase nscD catalyzes the addition of the dimethylallyl group to the aromatic C5. The FAD-dependent monooxygenase nscC is then responsible for the stereospecific hydroxylation at C2. There is no gene encoding O-acetyltransferase in the nsc gene cluster; thus, the last step of 2-O-acetylation leading to neosartoricin may be catalyzed by an unidentified O-acetyltransferase. In Aspergillus fumigatus (strain ATCC MYA-4609 / CBS 101355 / FGSC A1100 / Af293) (Neosartorya fumigata), this protein is Lactamase-like protein nscB.